Consider the following 324-residue polypeptide: Cytochrome c biogenesis protein CcsA (324 aa).

8 helical membrane passes run 17 to 37 (IISV…IPAL), 44 to 64 (GMIA…IYSG), 68 to 88 (LSNL…IHMI), 99 to 119 (YLSA…TSGL), 145 to 165 (MLLS…LLVI), 230 to 250 (VISI…VWAN), 264 to 278 (TWAF…IYSH), and 291 to 311 (AIVA…VNLL).

This sequence belongs to the CcmF/CycK/Ccl1/NrfE/CcsA family. May interact with Ccs1.

Its subcellular location is the plastid. It localises to the chloroplast thylakoid membrane. In terms of biological role, required during biogenesis of c-type cytochromes (cytochrome c6 and cytochrome f) at the step of heme attachment. This chain is Cytochrome c biogenesis protein CcsA, found in Lemna minor (Common duckweed).